Reading from the N-terminus, the 455-residue chain is DNA repair protein RadA (455 aa).

A C4-type zinc finger spans residues 11–28 (CVGCGYVHPKWLGRCPEC). 97–104 (GEPGIGKS) serves as a coordination point for ATP. The RadA KNRFG motif signature appears at 250-254 (KNRFG). The segment at 350 to 455 (DIYVNVAGGI…IAEIFSKAKA (106 aa)) is lon-protease-like.

It belongs to the RecA family. RadA subfamily.

In terms of biological role, DNA-dependent ATPase involved in processing of recombination intermediates, plays a role in repairing DNA breaks. Stimulates the branch migration of RecA-mediated strand transfer reactions, allowing the 3' invading strand to extend heteroduplex DNA faster. Binds ssDNA in the presence of ADP but not other nucleotides, has ATPase activity that is stimulated by ssDNA and various branched DNA structures, but inhibited by SSB. Does not have RecA's homology-searching function. This is DNA repair protein RadA from Treponema pallidum (strain Nichols).